A 368-amino-acid chain; its full sequence is UDP-N-acetylglucosamine--N-acetylmuramyl-(pentapeptide) pyrophosphoryl-undecaprenol N-acetylglucosamine transferase (368 aa).

Residues 13 to 15 (TGG), N124, R167, S195, and Q296 each bind UDP-N-acetyl-alpha-D-glucosamine.

The protein belongs to the glycosyltransferase 28 family. MurG subfamily.

It is found in the cell inner membrane. The catalysed reaction is di-trans,octa-cis-undecaprenyl diphospho-N-acetyl-alpha-D-muramoyl-L-alanyl-D-glutamyl-meso-2,6-diaminopimeloyl-D-alanyl-D-alanine + UDP-N-acetyl-alpha-D-glucosamine = di-trans,octa-cis-undecaprenyl diphospho-[N-acetyl-alpha-D-glucosaminyl-(1-&gt;4)]-N-acetyl-alpha-D-muramoyl-L-alanyl-D-glutamyl-meso-2,6-diaminopimeloyl-D-alanyl-D-alanine + UDP + H(+). The protein operates within cell wall biogenesis; peptidoglycan biosynthesis. Its function is as follows. Cell wall formation. Catalyzes the transfer of a GlcNAc subunit on undecaprenyl-pyrophosphoryl-MurNAc-pentapeptide (lipid intermediate I) to form undecaprenyl-pyrophosphoryl-MurNAc-(pentapeptide)GlcNAc (lipid intermediate II). The protein is UDP-N-acetylglucosamine--N-acetylmuramyl-(pentapeptide) pyrophosphoryl-undecaprenol N-acetylglucosamine transferase of Maricaulis maris (strain MCS10) (Caulobacter maris).